A 581-amino-acid polypeptide reads, in one-letter code: Phosphoglucomutase, cytoplasmic (581 aa).

Residues 1-11 (MVFSVAKKDTT) are compositionally biased toward basic and acidic residues. The interval 1-20 (MVFSVAKKDTTPYEGQKPGT) is disordered. Alpha-D-glucose 1,6-bisphosphate is bound by residues Arg24 and Ser123. The active-site Phosphoserine intermediate is Ser123. Mg(2+) contacts are provided by Ser123, Asp298, Asp300, and Asp302. The residue at position 123 (Ser123) is a Phosphoserine. Alpha-D-glucose 1,6-bisphosphate is bound by residues Asp302, Arg303, Thr366, Glu385, Ser387, and Lys398.

It belongs to the phosphohexose mutase family. In terms of assembly, monomer. Requires Mg(2+) as cofactor.

Its subcellular location is the cytoplasm. The enzyme catalyses alpha-D-glucose 1-phosphate = alpha-D-glucose 6-phosphate. The catalysed reaction is O-phospho-L-seryl-[protein] + alpha-D-glucose 1-phosphate = alpha-D-glucose 1,6-bisphosphate + L-seryl-[protein]. It catalyses the reaction alpha-D-glucose 1,6-bisphosphate + L-seryl-[protein] = O-phospho-L-seryl-[protein] + alpha-D-glucose 6-phosphate. Functionally, catalyzes the reversible isomerization of alpha-D-glucose 1-phosphate to alpha-D-glucose 6-phosphate. The mechanism proceeds via the intermediate compound alpha-D-glucose 1,6-bisphosphate. This enzyme participates in both the breakdown and synthesis of glucose. This chain is Phosphoglucomutase, cytoplasmic (PGM1), found in Bromus inermis (Smooth brome grass).